Here is an 877-residue protein sequence, read N- to C-terminus: DNA polymerase I (877 aa).

The 5'-3' exonuclease domain maps to 1–310; it reads MKKKLVLIDG…FTLADRVTEE (310 aa). Residues 311–465 form the 3'-5' exonuclease domain; it reads MLADKAALVV…ALERPFLDEL (155 aa). The tract at residues 469 to 877 is polymerase; it reads EQDRLLVELE…HYGSTWYDAK (409 aa).

This sequence belongs to the DNA polymerase type-A family. As to quaternary structure, single-chain monomer with multiple functions.

The catalysed reaction is DNA(n) + a 2'-deoxyribonucleoside 5'-triphosphate = DNA(n+1) + diphosphate. Functionally, in addition to polymerase activity, this DNA polymerase exhibits 3'-5' and 5'-3' exonuclease activity. This chain is DNA polymerase I (polA), found in Bacillus caldotenax.